The following is a 320-amino-acid chain: Methenyltetrahydromethanopterin cyclohydrolase (320 aa).

The protein belongs to the MCH family.

The protein resides in the cytoplasm. It catalyses the reaction 5,10-methenyl-5,6,7,8-tetrahydromethanopterin + H2O = N(5)-formyl-5,6,7,8-tetrahydromethanopterin + H(+). Its function is as follows. Catalyzes the hydrolysis of methenyl-H(4)MPT(+) to 5-formyl-H(4)MPT. This Methanococcoides burtonii (strain DSM 6242 / NBRC 107633 / OCM 468 / ACE-M) protein is Methenyltetrahydromethanopterin cyclohydrolase.